We begin with the raw amino-acid sequence, 462 residues long: L-seryl-tRNA(Sec) selenium transferase (462 aa).

N6-(pyridoxal phosphate)lysine is present on lysine 294.

Belongs to the SelA family. Homodecamer; pentamer of dimers. Binds only one seryl-tRNA(Sec) per dimer. Requires pyridoxal 5'-phosphate as cofactor.

Its subcellular location is the cytoplasm. The catalysed reaction is L-seryl-tRNA(Sec) + selenophosphate + H(+) = L-selenocysteinyl-tRNA(Sec) + phosphate. It participates in aminoacyl-tRNA biosynthesis; selenocysteinyl-tRNA(Sec) biosynthesis; selenocysteinyl-tRNA(Sec) from L-seryl-tRNA(Sec) (bacterial route): step 1/1. Converts seryl-tRNA(Sec) to selenocysteinyl-tRNA(Sec) required for selenoprotein biosynthesis. In Yersinia enterocolitica serotype O:8 / biotype 1B (strain NCTC 13174 / 8081), this protein is L-seryl-tRNA(Sec) selenium transferase.